The sequence spans 762 residues: 1-phosphatidylinositol 4,5-bisphosphate phosphodiesterase delta-4 (762 aa).

Residues 16 to 124 enclose the PH domain; sequence LLMQEGMPMR…WMRGLQLLVD (109 aa). Positions 26 to 53 are substrate binding; it reads KVRSKSWKKLRYFRLQNDGMTVWHARQA. EF-hand domains follow at residues 134–169, 170–205, and 206–237; these read RLDQ…MNVE, MDQE…LTKR, and AEVQ…EQKE. Ca(2+) contacts are provided by Asp147, Asn149, Asp151, Lys153, Glu158, Asp183, Ser185, Ser187, Thr189, and Glu194. The GBA signature appears at 213-243; that stretch reads ESFSADGQKLTLLEFLDFLREEQKERDCTSE. In terms of domain architecture, PI-PLC X-box spans 290–435; that stretch reads QDMTQPLNHY…LRRRILVKGK (146 aa). His305 is an active-site residue. Ca(2+) is bound by residues Asn306, Glu335, and Asp337. His350 is a catalytic residue. Glu384 is a binding site for Ca(2+). Positions 433 and 435 each coordinate substrate. Acidic residues predominate over residues 443-471; it reads LEYEEEEAEPELEESELALESQFETEPEP. The interval 443-483 is disordered; the sequence is LEYEEEEAEPELEESELALESQFETEPEPQEQNLQSKDKKK. Position 457 is a phosphoserine (Ser457). Residues 493 to 609 enclose the PI-PLC Y-box domain; it reads LSSLVIYLKS…GYVLKPDFLR (117 aa). The substrate site is built by Ser522 and Arg549. The 128-residue stretch at 609–736 folds into the C2 domain; it reads RDIQSSFHPE…QGYRHIHLLS (128 aa). Ca(2+)-binding residues include Ile650, Asp652, Asn676, Asp705, Tyr706, and Asp707. Positions 731–734 match the PDZ-binding motif; it reads HIHL.

Interacts with GRIP1. Interacts (via GBA motif) with guanine nucleotide-binding protein G(i) alpha subunit GNAI3 (inactive GDP-bound form); low-affinity interaction. Ca(2+) is required as a cofactor.

Its subcellular location is the membrane. It localises to the nucleus. The protein resides in the cytoplasm. It is found in the endoplasmic reticulum. The enzyme catalyses a 1,2-diacyl-sn-glycero-3-phospho-(1D-myo-inositol-4,5-bisphosphate) + H2O = 1D-myo-inositol 1,4,5-trisphosphate + a 1,2-diacyl-sn-glycerol + H(+). It carries out the reaction a 1,2-diacyl-sn-glycero-3-phospho-(1D-myo-inositol) + H2O = 1D-myo-inositol 1-phosphate + a 1,2-diacyl-sn-glycerol + H(+). Its function is as follows. Hydrolyzes the phosphatidylinositol 4,5-bisphosphate (PIP2) to generate 2 second messenger molecules diacylglycerol (DAG) and inositol 1,4,5-trisphosphate (IP3). DAG mediates the activation of protein kinase C (PKC), while IP3 releases Ca(2+) from intracellular stores. Required for acrosome reaction in sperm during fertilization, probably by acting as an important enzyme for intracellular Ca(2+) mobilization in the zona pellucida-induced acrosome reaction. May play a role in cell growth. Modulates the liver regeneration in cooperation with nuclear PKC. Overexpression up-regulates the Erk signaling pathway and proliferation. The polypeptide is 1-phosphatidylinositol 4,5-bisphosphate phosphodiesterase delta-4 (PLCD4) (Pongo abelii (Sumatran orangutan)).